We begin with the raw amino-acid sequence, 398 residues long: Proteasome-activating nucleotidase (398 aa).

Residues 3 to 60 (DSEIQYLLEKLKKLEEDYYKLRELYRRLEDEKKFIESERIRYEREVRRLRSEVERLRS) are a coiled coil. ATP contacts are provided by residues 185-190 (GTGKTL) and His-324. The tract at residues 396–398 (MFV) is docks into pockets in the proteasome alpha-ring to cause gate opening.

This sequence belongs to the AAA ATPase family. Homohexamer. The hexameric complex has a two-ring architecture resembling a top hat that caps the 20S proteasome core at one or both ends. Upon ATP-binding, the C-terminus of PAN interacts with the alpha-rings of the proteasome core by binding to the intersubunit pockets.

The protein localises to the cytoplasm. Its function is as follows. ATPase which is responsible for recognizing, binding, unfolding and translocation of substrate proteins into the archaeal 20S proteasome core particle. Is essential for opening the gate of the 20S proteasome via an interaction with its C-terminus, thereby allowing substrate entry and access to the site of proteolysis. Thus, the C-termini of the proteasomal ATPase function like a 'key in a lock' to induce gate opening and therefore regulate proteolysis. Unfolding activity requires energy from ATP hydrolysis, whereas ATP binding alone promotes ATPase-20S proteasome association which triggers gate opening, and supports translocation of unfolded substrates. In Archaeoglobus fulgidus (strain ATCC 49558 / DSM 4304 / JCM 9628 / NBRC 100126 / VC-16), this protein is Proteasome-activating nucleotidase.